We begin with the raw amino-acid sequence, 453 residues long: Bifunctional protein GlmU (453 aa).

The segment at 1–231 (MERTCLAVIL…EIEMTGCNNR (231 aa)) is pyrophosphorylase. Residues 10-13 (LAAG), lysine 24, glutamine 77, 82-83 (GT), 105-107 (YGD), glycine 143, glutamate 157, asparagine 172, and asparagine 229 contribute to the UDP-N-acetyl-alpha-D-glucosamine site. Aspartate 107 provides a ligand contact to Mg(2+). Asparagine 229 contacts Mg(2+). The linker stretch occupies residues 232 to 252 (AELAVIERFWQERRRREMMLA). Residues 253–453 (GVTMIAPETV…AIKAAKRAKA (201 aa)) are N-acetyltransferase. Arginine 318 and lysine 336 together coordinate UDP-N-acetyl-alpha-D-glucosamine. Catalysis depends on histidine 348, which acts as the Proton acceptor. UDP-N-acetyl-alpha-D-glucosamine is bound by residues tyrosine 351 and asparagine 362. Residues alanine 365, 371–372 (NY), serine 390, serine 408, and arginine 425 contribute to the acetyl-CoA site.

This sequence in the N-terminal section; belongs to the N-acetylglucosamine-1-phosphate uridyltransferase family. It in the C-terminal section; belongs to the transferase hexapeptide repeat family. As to quaternary structure, homotrimer. Requires Mg(2+) as cofactor.

It is found in the cytoplasm. It carries out the reaction alpha-D-glucosamine 1-phosphate + acetyl-CoA = N-acetyl-alpha-D-glucosamine 1-phosphate + CoA + H(+). The catalysed reaction is N-acetyl-alpha-D-glucosamine 1-phosphate + UTP + H(+) = UDP-N-acetyl-alpha-D-glucosamine + diphosphate. It functions in the pathway nucleotide-sugar biosynthesis; UDP-N-acetyl-alpha-D-glucosamine biosynthesis; N-acetyl-alpha-D-glucosamine 1-phosphate from alpha-D-glucosamine 6-phosphate (route II): step 2/2. Its pathway is nucleotide-sugar biosynthesis; UDP-N-acetyl-alpha-D-glucosamine biosynthesis; UDP-N-acetyl-alpha-D-glucosamine from N-acetyl-alpha-D-glucosamine 1-phosphate: step 1/1. It participates in bacterial outer membrane biogenesis; LPS lipid A biosynthesis. In terms of biological role, catalyzes the last two sequential reactions in the de novo biosynthetic pathway for UDP-N-acetylglucosamine (UDP-GlcNAc). The C-terminal domain catalyzes the transfer of acetyl group from acetyl coenzyme A to glucosamine-1-phosphate (GlcN-1-P) to produce N-acetylglucosamine-1-phosphate (GlcNAc-1-P), which is converted into UDP-GlcNAc by the transfer of uridine 5-monophosphate (from uridine 5-triphosphate), a reaction catalyzed by the N-terminal domain. The chain is Bifunctional protein GlmU from Rhizobium etli (strain CIAT 652).